Here is a 503-residue protein sequence, read N- to C-terminus: V-type proton ATPase subunit B (503 aa).

Arg-378 is a binding site for ATP. A phosphoserine mark is found at Ser-491, Ser-492, Ser-502, and Ser-503.

The protein belongs to the ATPase alpha/beta chains family. In terms of assembly, V-ATPase is a heteromultimeric enzyme composed of a peripheral catalytic V1 complex (components A to H) attached to an integral membrane V0 proton pore complex (components: a, c, c', c'', d, e, f and VOA1). Interacts with rav1.

It localises to the vacuole membrane. In terms of biological role, non-catalytic subunit of the V1 complex of vacuolar(H+)-ATPase (V-ATPase), a multisubunit enzyme composed of a peripheral complex (V1) that hydrolyzes ATP and a membrane integral complex (V0) that translocates protons. V-ATPase is responsible for acidifying and maintaining the pH of intracellular compartments. This Schizosaccharomyces pombe (strain 972 / ATCC 24843) (Fission yeast) protein is V-type proton ATPase subunit B.